We begin with the raw amino-acid sequence, 132 residues long: Sec-independent protein translocase protein TatB (132 aa).

The chain crosses the membrane as a helical span at residues 1–21; the sequence is MFDIGFWELVLISVVGLVVLG. Residues 70-132 form a disordered region; that stretch reads GMEDLSPELK…KVSAADKKAE (63 aa). Composition is skewed to basic and acidic residues over residues 96–108 and 115–132; these read YADKAQSETETAK and SAEKVEEIKVSAADKKAE.

The protein belongs to the TatB family. The Tat system comprises two distinct complexes: a TatABC complex, containing multiple copies of TatA, TatB and TatC subunits, and a separate TatA complex, containing only TatA subunits. Substrates initially bind to the TatABC complex, which probably triggers association of the separate TatA complex to form the active translocon.

The protein resides in the cell inner membrane. Functionally, part of the twin-arginine translocation (Tat) system that transports large folded proteins containing a characteristic twin-arginine motif in their signal peptide across membranes. Together with TatC, TatB is part of a receptor directly interacting with Tat signal peptides. TatB may form an oligomeric binding site that transiently accommodates folded Tat precursor proteins before their translocation. In Vibrio parahaemolyticus serotype O3:K6 (strain RIMD 2210633), this protein is Sec-independent protein translocase protein TatB.